The chain runs to 181 residues: Large ribosomal subunit protein uL5c (181 aa).

It belongs to the universal ribosomal protein uL5 family. In terms of assembly, part of the 50S ribosomal subunit; contacts the 5S rRNA.

It localises to the plastid. It is found in the chloroplast. Its function is as follows. Binds 5S rRNA, forms part of the central protuberance of the 50S subunit. The chain is Large ribosomal subunit protein uL5c (rpl5) from Heterosigma akashiwo (strain NIES-293 / 8280G21-1).